A 323-amino-acid polypeptide reads, in one-letter code: tRNA U34 carboxymethyltransferase (323 aa).

Residues lysine 91, tryptophan 105, lysine 110, glycine 130, 152 to 154 (DPS), 181 to 182 (IE), methionine 196, tyrosine 200, and arginine 315 contribute to the carboxy-S-adenosyl-L-methionine site.

It belongs to the class I-like SAM-binding methyltransferase superfamily. CmoB family. Homotetramer.

It catalyses the reaction carboxy-S-adenosyl-L-methionine + 5-hydroxyuridine(34) in tRNA = 5-carboxymethoxyuridine(34) in tRNA + S-adenosyl-L-homocysteine + H(+). Catalyzes carboxymethyl transfer from carboxy-S-adenosyl-L-methionine (Cx-SAM) to 5-hydroxyuridine (ho5U) to form 5-carboxymethoxyuridine (cmo5U) at position 34 in tRNAs. This chain is tRNA U34 carboxymethyltransferase, found in Vibrio cholerae serotype O1 (strain ATCC 39541 / Classical Ogawa 395 / O395).